A 345-amino-acid polypeptide reads, in one-letter code: MHFLSQNDLNINLIPHLCLHRHSVIAGAFTIHRHMKIFNSPSNSSTFTGFILLGFPCPREGQILLFVLFTVVYLLTLMGNGSIICAVHWDQRLHAPMYILLANFSFLEICYVTSTVPSMLANFLSDTKIISFSGCFLQFYFFFSLGSTECFFLAVMAFDRYLAICRPLRYPTIMTRRLCTNLVVNCWVLGFIWFLIPIVNISQMSFCGSRIIDHFLCDPAPLLTLTCKKGPVIELVFSVLSPLPVFMLFLFIVGSYALVVRAVLRVPSAAGRRKAFSTCGSHLAVVSLFYGSVLVMYGSPPSKNEAGKQKTVTLFYSVVTPLLNPVIYSLRNKDMRKALKKFWGT.

Over 1–62 (MHFLSQNDLN…LGFPCPREGQ (62 aa)) the chain is Extracellular. Residue Asn-43 is glycosylated (N-linked (GlcNAc...) asparagine). The chain crosses the membrane as a helical span at residues 63–83 (ILLFVLFTVVYLLTLMGNGSI). The Cytoplasmic segment spans residues 84 to 92 (ICAVHWDQR). The helical transmembrane segment at 93-113 (LHAPMYILLANFSFLEICYVT) threads the bilayer. Residues 114 to 135 (STVPSMLANFLSDTKIISFSGC) are Extracellular-facing. An intrachain disulfide couples Cys-135 to Cys-217. Residues 136–156 (FLQFYFFFSLGSTECFFLAVM) traverse the membrane as a helical segment. At 157–181 (AFDRYLAICRPLRYPTIMTRRLCTN) the chain is on the cytoplasmic side. A helical membrane pass occupies residues 182 to 202 (LVVNCWVLGFIWFLIPIVNIS). The Extracellular portion of the chain corresponds to 203–241 (QMSFCGSRIIDHFLCDPAPLLTLTCKKGPVIELVFSVLS). A helical transmembrane segment spans residues 242 to 264 (PLPVFMLFLFIVGSYALVVRAVL). Over 265–275 (RVPSAAGRRKA) the chain is Cytoplasmic. Residues 276 to 296 (FSTCGSHLAVVSLFYGSVLVM) traverse the membrane as a helical segment. The Extracellular portion of the chain corresponds to 297-309 (YGSPPSKNEAGKQ). A helical transmembrane segment spans residues 310 to 330 (KTVTLFYSVVTPLLNPVIYSL). Topologically, residues 331–345 (RNKDMRKALKKFWGT) are cytoplasmic.

Belongs to the G-protein coupled receptor 1 family.

It is found in the cell membrane. Functionally, odorant receptor. The chain is Olfactory receptor 11G2 (OR11G2) from Homo sapiens (Human).